The following is a 488-amino-acid chain: Catalase (488 aa).

Positions 1 to 26 are disordered; it reads MTDRKNLTTNQGVPVGDNQNSMTAGR. Polar residues predominate over residues 7–23; that stretch reads LTTNQGVPVGDNQNSMT. Active-site residues include H55 and N128. Y338 serves as a coordination point for heme.

Belongs to the catalase family. It depends on heme as a cofactor.

It is found in the cytoplasm. The enzyme catalyses 2 H2O2 = O2 + 2 H2O. In terms of biological role, decomposes hydrogen peroxide into water and oxygen; serves to protect cells from the toxic effects of hydrogen peroxide. The sequence is that of Catalase (kat) from Listeria monocytogenes serovar 1/2a (strain ATCC BAA-679 / EGD-e).